Here is a 403-residue protein sequence, read N- to C-terminus: Phosphoglycerate kinase (403 aa).

Substrate is bound by residues 24–26 (DLN), Arg39, 62–65 (HLGR), Arg121, and Arg161. Residues Lys211, Gly299, Glu330, and 359–362 (GGDS) each bind ATP.

It belongs to the phosphoglycerate kinase family. As to quaternary structure, monomer.

Its subcellular location is the cytoplasm. The enzyme catalyses (2R)-3-phosphoglycerate + ATP = (2R)-3-phospho-glyceroyl phosphate + ADP. It functions in the pathway carbohydrate degradation; glycolysis; pyruvate from D-glyceraldehyde 3-phosphate: step 2/5. This chain is Phosphoglycerate kinase, found in Rhodococcus erythropolis (strain PR4 / NBRC 100887).